The chain runs to 299 residues: Deoxyribonuclease-1-like 2 (299 aa).

A signal peptide spans 1–20 (MGGPRALLAALWALEAAGTA). Catalysis depends on residues glutamate 99 and histidine 170. A disulfide bond links cysteine 209 and cysteine 245.

The protein belongs to the DNase I family. Mg(2+) serves as cofactor. Requires Ca(2+) as cofactor. In terms of tissue distribution, preferentially expressed in the skin and up-regulated during keratinocytes differentiation. Highly abundant (at protein level) in the stratum granulosum.

The protein localises to the cytoplasm. It localises to the secreted. Functionally, divalent cation-dependent acid DNA endonuclease involved in the breakdown of the nucleus during corneocyte formation of epidermal keratinocytes. May play an immune role by eliminating harmful DNA released into the extracellular environment by damaged epidermal cells. The protein is Deoxyribonuclease-1-like 2 (DNASE1L2) of Homo sapiens (Human).